The chain runs to 478 residues: Sulfate adenylyltransferase subunit 1 (478 aa).

One can recognise a tr-type G domain in the interval 28-244 (KTMLRFLTCG…LESVDVVNAS (217 aa)). Positions 37–44 (GSVDDGKS) are G1. 37-44 (GSVDDGKS) serves as a coordination point for GTP. Residues 95-99 (GITID) are G2. The interval 116–119 (DTPG) is G3. GTP is bound by residues 116–120 (DTPGH) and 171–174 (NKMD). The tract at residues 171–174 (NKMD) is G4. The G5 stretch occupies residues 209-211 (SAL).

This sequence belongs to the TRAFAC class translation factor GTPase superfamily. Classic translation factor GTPase family. CysN/NodQ subfamily. In terms of assembly, heterodimer composed of CysD, the smaller subunit, and CysN.

It carries out the reaction sulfate + ATP + H(+) = adenosine 5'-phosphosulfate + diphosphate. Its pathway is sulfur metabolism; hydrogen sulfide biosynthesis; sulfite from sulfate: step 1/3. In terms of biological role, with CysD forms the ATP sulfurylase (ATPS) that catalyzes the adenylation of sulfate producing adenosine 5'-phosphosulfate (APS) and diphosphate, the first enzymatic step in sulfur assimilation pathway. APS synthesis involves the formation of a high-energy phosphoric-sulfuric acid anhydride bond driven by GTP hydrolysis by CysN coupled to ATP hydrolysis by CysD. The polypeptide is Sulfate adenylyltransferase subunit 1 (Yersinia enterocolitica serotype O:8 / biotype 1B (strain NCTC 13174 / 8081)).